Here is a 515-residue protein sequence, read N- to C-terminus: Dimethylnonatriene synthase (515 aa).

A helical transmembrane segment spans residues F3–I23. Residue H219 participates in substrate binding. A Glycyl lysine isopeptide (Lys-Gly) (interchain with G-Cter in ubiquitin) cross-link involves residue K252. Residue C452 participates in heme binding.

This sequence belongs to the cytochrome P450 family. It depends on heme as a cofactor. As to expression, expressed in stems, flower peduncles, receptacle of developing and mature flowers and in stigma of mature opening flower buds.

It is found in the membrane. The enzyme catalyses (3S,6E)-nerolidol + reduced [NADPH--hemoprotein reductase] + O2 = (3E)-4,8-dimethylnona-1,3,7-triene + but-3-en-2-one + oxidized [NADPH--hemoprotein reductase] + 2 H2O + H(+). It carries out the reaction (6E,10E)-geranyllinalool + reduced [NADPH--hemoprotein reductase] + O2 = (3E,7E)-4,8,12-trimethyltrideca 1,3,7,11-tetraene + but-3-en-2-one + oxidized [NADPH--hemoprotein reductase] + 2 H2O + H(+). It participates in secondary metabolite biosynthesis; terpenoid biosynthesis. In terms of biological role, involved in the biosynthesis of homoterpenes, attractants of herbivores parasitoids and predators (e.g. predatory mites and parasitoid wasps). Catalyzes the conversion of the C20 (E,E)-geranyllinalool to C16-homoterpene 4,8,12-trimethyltrideca-1,3,7,11-tetraene (TMTT) of the C15 (E)-nerolidol to C11-homoterpene (E)-4,8-dimethyl-1,3,7-nonatriene (DMNT); these volatile compounds are produced upon insect herbivore attack and emitted from flowers and vegetative tissues during herbivore feeding. Required during resistance responses to the fungus Alternaria brassicae. Prevents oviposition of the phloem-feeding insect cabbage whitefly (Aleyrodes proletella). This chain is Dimethylnonatriene synthase, found in Arabidopsis thaliana (Mouse-ear cress).